The sequence spans 56 residues: Small ribosomal subunit protein uS14 (56 aa).

Zn(2+)-binding residues include Cys-21, Cys-24, Cys-39, and Cys-42.

It belongs to the universal ribosomal protein uS14 family. Requires Zn(2+) as cofactor.

This Debaryomyces hansenii (strain ATCC 36239 / CBS 767 / BCRC 21394 / JCM 1990 / NBRC 0083 / IGC 2968) (Yeast) protein is Small ribosomal subunit protein uS14 (RPS29).